Reading from the N-terminus, the 381-residue chain is 5-amino-6-(D-ribitylamino)uracil--L-tyrosine 4-hydroxyphenyl transferase (381 aa).

Positions 59–306 (VTYVVNRNIN…TAVARIFLGN (248 aa)) constitute a Radical SAM core domain. Residues Cys73, Cys77, and Cys80 each contribute to the [4Fe-4S] cluster site.

It belongs to the radical SAM superfamily. CofH family. Consists of two subunits, CofG and CofH. It depends on [4Fe-4S] cluster as a cofactor.

It carries out the reaction 5-amino-6-(D-ribitylamino)uracil + L-tyrosine + S-adenosyl-L-methionine = 5-amino-5-(4-hydroxybenzyl)-6-(D-ribitylimino)-5,6-dihydrouracil + 2-iminoacetate + 5'-deoxyadenosine + L-methionine + H(+). It participates in cofactor biosynthesis; coenzyme F0 biosynthesis. In terms of biological role, catalyzes the radical-mediated synthesis of 5-amino-5-(4-hydroxybenzyl)-6-(D-ribitylimino)-5,6-dihydrouracil from 5-amino-6-(D-ribitylamino)uracil and L-tyrosine. In Cyanothece sp. (strain PCC 7425 / ATCC 29141), this protein is 5-amino-6-(D-ribitylamino)uracil--L-tyrosine 4-hydroxyphenyl transferase.